The following is a 413-amino-acid chain: Multifunctional CCA protein (413 aa).

ATP contacts are provided by Gly8 and Arg11. Gly8 and Arg11 together coordinate CTP. Mg(2+) is bound by residues Asp21 and Asp23. Residues Arg91, Arg143, and Arg146 each coordinate ATP. CTP-binding residues include Arg91, Arg143, and Arg146. Residues 232–333 (TGVHVMMVVD…VRFFERSDAL (102 aa)) form the HD domain.

This sequence belongs to the tRNA nucleotidyltransferase/poly(A) polymerase family. Bacterial CCA-adding enzyme type 1 subfamily. Monomer. Can also form homodimers and oligomers. Mg(2+) serves as cofactor. The cofactor is Ni(2+).

The catalysed reaction is a tRNA precursor + 2 CTP + ATP = a tRNA with a 3' CCA end + 3 diphosphate. It carries out the reaction a tRNA with a 3' CCA end + 2 CTP + ATP = a tRNA with a 3' CCACCA end + 3 diphosphate. In terms of biological role, catalyzes the addition and repair of the essential 3'-terminal CCA sequence in tRNAs without using a nucleic acid template. Adds these three nucleotides in the order of C, C, and A to the tRNA nucleotide-73, using CTP and ATP as substrates and producing inorganic pyrophosphate. tRNA 3'-terminal CCA addition is required both for tRNA processing and repair. Also involved in tRNA surveillance by mediating tandem CCA addition to generate a CCACCA at the 3' terminus of unstable tRNAs. While stable tRNAs receive only 3'-terminal CCA, unstable tRNAs are marked with CCACCA and rapidly degraded. This Burkholderia ambifaria (strain MC40-6) protein is Multifunctional CCA protein.